The primary structure comprises 200 residues: Probable GTP-binding protein EngB (200 aa).

The EngB-type G domain occupies 22–199 (GLDEIALAGR…KDWIQARLYE (178 aa)). GTP contacts are provided by residues 30–37 (GRSNVGKS), 57–61 (GKTQT), 78–81 (DVPG), 145–148 (TKMD), and 178–180 (FSS). S37 and T59 together coordinate Mg(2+).

The protein belongs to the TRAFAC class TrmE-Era-EngA-EngB-Septin-like GTPase superfamily. EngB GTPase family. It depends on Mg(2+) as a cofactor.

Necessary for normal cell division and for the maintenance of normal septation. This chain is Probable GTP-binding protein EngB, found in Lactobacillus delbrueckii subsp. bulgaricus (strain ATCC 11842 / DSM 20081 / BCRC 10696 / JCM 1002 / NBRC 13953 / NCIMB 11778 / NCTC 12712 / WDCM 00102 / Lb 14).